Consider the following 379-residue polypeptide: Cobalt-precorrin-5B C(1)-methyltransferase (379 aa).

This sequence belongs to the CbiD family.

It carries out the reaction Co-precorrin-5B + S-adenosyl-L-methionine = Co-precorrin-6A + S-adenosyl-L-homocysteine. Its pathway is cofactor biosynthesis; adenosylcobalamin biosynthesis; cob(II)yrinate a,c-diamide from sirohydrochlorin (anaerobic route): step 6/10. In terms of biological role, catalyzes the methylation of C-1 in cobalt-precorrin-5B to form cobalt-precorrin-6A. The polypeptide is Cobalt-precorrin-5B C(1)-methyltransferase (Salmonella paratyphi A (strain ATCC 9150 / SARB42)).